A 388-amino-acid polypeptide reads, in one-letter code: Trans-enoyl reductase tenC (388 aa).

Residue 51 to 54 (VDGK) participates in NADP(+) binding. 142 to 149 (VGIASVGM) serves as a coordination point for substrate. NADP(+) is bound by residues 219–222 (SSES), Tyr-237, and 284–285 (LD). Residue 304–308 (SFTQF) participates in substrate binding. Position 373-374 (373-374 (IK)) interacts with NADP(+).

Belongs to the zinc-containing alcohol dehydrogenase family. In terms of assembly, monomer.

It functions in the pathway secondary metabolite biosynthesis. Functionally, trans-enoyl reductase; part of the gene cluster that mediates the biosynthesis of tenellin-type 2-pyridones, iron-chelating compounds involved in iron stress tolerance, competition with the natural competitor fungus Metarhizium robertsii and insect hosts infection. TenC collaborates with the hybrid PKS-NRPS synthetase tenS to catalyze the assembly of the polyketide-amino acid backbone, since tenS lacks a designated enoylreductase (ER) domain. Upon formation of the polyketide backbone on the thiotemplate of tenS, the triketide is transferred to the NRPS module and linked to tyrosine to produce the pyrrolidine-2-dione intermediates, including pretellinin A, 11-hydropretellenin A, 12-hydropretellenin A, 13-hydropretellenin A, 14-hydropretellenin A, 12-oxopretellenin A and prototellinin D. The pathway begins with the assembly of the polyketide-amino acid backbone by the hybrid PKS-NRPS tenS with the help of the enoyl reductase tenC. These enzymes catalyze the synthesis of the pyrrolidine-2-dione intermediates pretellinin A, 11-hydropretellenin A, 12-hydropretellenin A, 13-hydropretellenin A, 14-hydropretellenin A, 12-oxopretellenin A and prototellinin D. The cytochrome P450 monooxygenase tenA then catalyzes an oxidative ring expansion of pretenellin A and 14-hydropretellenin A to form the 2-pyridone core, leading to pretenellin B and pyridovericin, respectively. The cytochrome P450 monooxygenase tenB is then required for the selective N-hydroxylation of the 2-pyridone nitrogen of yield tellinin and 15-hydroxytellenin (15-HT), respectively. The UDP-glucosyltransferase GT1 and the methyltransferase MT1, located outside the tenS gene cluster, contribute to the stepwise glycosylation and methylation of 15-HT to obtain the glycoside pyridovericin-N-O-(4-O-methyl-beta-D-glucopyranoside) (PMGP). Additional related compounds such as 1-O-methyl-15-HT, (8Z)-1-O-methyl-15-HT, and O-methyltenellin A are also produced but the enzymes involved in their biosynthesis have still to be determined. This Beauveria bassiana (strain ARSEF 2860) (White muscardine disease fungus) protein is Trans-enoyl reductase tenC.